We begin with the raw amino-acid sequence, 964 residues long: Glycine dehydrogenase (decarboxylating) (964 aa).

Lys-711 carries the post-translational modification N6-(pyridoxal phosphate)lysine.

This sequence belongs to the GcvP family. The glycine cleavage system is composed of four proteins: P, T, L and H. It depends on pyridoxal 5'-phosphate as a cofactor.

It catalyses the reaction N(6)-[(R)-lipoyl]-L-lysyl-[glycine-cleavage complex H protein] + glycine + H(+) = N(6)-[(R)-S(8)-aminomethyldihydrolipoyl]-L-lysyl-[glycine-cleavage complex H protein] + CO2. The glycine cleavage system catalyzes the degradation of glycine. The P protein binds the alpha-amino group of glycine through its pyridoxal phosphate cofactor; CO(2) is released and the remaining methylamine moiety is then transferred to the lipoamide cofactor of the H protein. The polypeptide is Glycine dehydrogenase (decarboxylating) (Prochlorococcus marinus (strain SARG / CCMP1375 / SS120)).